Here is a 368-residue protein sequence, read N- to C-terminus: 3-dehydroquinate synthase (368 aa).

Residues 71–76 (DGEAFK), 105–109 (GVVGD), 129–130 (TT), Lys-142, Lys-151, and 169–172 (TLRT) each bind NAD(+). Zn(2+) contacts are provided by Glu-184, His-247, and His-264.

It belongs to the sugar phosphate cyclases superfamily. Dehydroquinate synthase family. Co(2+) serves as cofactor. The cofactor is Zn(2+). It depends on NAD(+) as a cofactor.

The protein resides in the cytoplasm. It catalyses the reaction 7-phospho-2-dehydro-3-deoxy-D-arabino-heptonate = 3-dehydroquinate + phosphate. It participates in metabolic intermediate biosynthesis; chorismate biosynthesis; chorismate from D-erythrose 4-phosphate and phosphoenolpyruvate: step 2/7. Functionally, catalyzes the conversion of 3-deoxy-D-arabino-heptulosonate 7-phosphate (DAHP) to dehydroquinate (DHQ). The sequence is that of 3-dehydroquinate synthase from Cupriavidus pinatubonensis (strain JMP 134 / LMG 1197) (Cupriavidus necator (strain JMP 134)).